Consider the following 588-residue polypeptide: Zeta-carotene desaturase, chloroplastic/chromoplastic (588 aa).

The protein belongs to the zeta carotene desaturase family. NAD(+) is required as a cofactor. It depends on NADP(+) as a cofactor. FAD serves as cofactor.

It is found in the plastid. The protein resides in the chloroplast. It localises to the chromoplast. It carries out the reaction 9,9'-di-cis-zeta-carotene + 2 a quinone = 7,7',9,9'-tetra-cis-lycopene + 2 a quinol. It functions in the pathway carotenoid biosynthesis; lycopene biosynthesis. Its function is as follows. Catalyzes the conversion of zeta-carotene to lycopene via the intermediary of neurosporene. It carries out two consecutive desaturations (introduction of double bonds) at positions C-7 and C-7'. This is Zeta-carotene desaturase, chloroplastic/chromoplastic (ZDS) from Solanum lycopersicum (Tomato).